A 468-amino-acid polypeptide reads, in one-letter code: ATP synthase subunit beta (468 aa).

155–162 (GGAGVGKT) serves as a coordination point for ATP.

Belongs to the ATPase alpha/beta chains family. In terms of assembly, F-type ATPases have 2 components, CF(1) - the catalytic core - and CF(0) - the membrane proton channel. CF(1) has five subunits: alpha(3), beta(3), gamma(1), delta(1), epsilon(1). CF(0) has three main subunits: a(1), b(2) and c(9-12). The alpha and beta chains form an alternating ring which encloses part of the gamma chain. CF(1) is attached to CF(0) by a central stalk formed by the gamma and epsilon chains, while a peripheral stalk is formed by the delta and b chains.

It localises to the cell inner membrane. The catalysed reaction is ATP + H2O + 4 H(+)(in) = ADP + phosphate + 5 H(+)(out). Produces ATP from ADP in the presence of a proton gradient across the membrane. The catalytic sites are hosted primarily by the beta subunits. In Thermotoga petrophila (strain ATCC BAA-488 / DSM 13995 / JCM 10881 / RKU-1), this protein is ATP synthase subunit beta.